We begin with the raw amino-acid sequence, 405 residues long: Nuclear hormone receptor family member nhr-199 (405 aa).

The segment at residues Ile20–Gln111 is a DNA-binding region (nuclear receptor). 2 consecutive NR C4-type zinc fingers follow at residues Cys23–Cys44 and Cys60–Cys94. The NR LBD domain occupies Arg126 to Lys376.

It belongs to the nuclear hormone receptor family.

The protein localises to the nucleus. Functionally, orphan nuclear receptor. The chain is Nuclear hormone receptor family member nhr-199 (nhr-199) from Caenorhabditis elegans.